A 651-amino-acid chain; its full sequence is MNILGFFQRLGRALQLPIAVLPVAALLLRFGQPDLLNVPFIAQAGGAIFDNLALIFAIGVASSWSKDNAGSAALAGAVGYFVMTKAMVTINPEINMGVLAGIITGLVAGAVYNRWAGIKLPDFLSFFGGKRFVPIATGFFCLILAAIFGYVWPPVQHAIHSGGEWIVSAGALGSGIFGFINRLLIPTGLHQVLNTIAWFQIGEFTNAAGTVFHGDINRFYAGDGTAGMFMSGFFPIMMFGLPGAALAMYLAAPKARRPMVGGMLLSVAITAFLTGVTEPLEFLFLFLAPLLYLLHAVLTGISLFIATALGIHAGFSFSAGAIDYVLMYSLPAASKNVWMLLVMGVVFFFVYFLLFSAVIRMFNLKTPGREDKAADVVTEEANSNTEEGLTQLATSYIAAVGGTDNLKAIDACITRLRLTVGDSAKVNDAACKRLGASGVVKLNKQTIQVIVGAKAESIGDEMKKVVTRGPVAAAAAAPAGNVATAAPAAKPQAVANAKTVESLVSPITGDVVALEQVPDEAFASKAVGDGIAVKPTDNIVVAPAAGTVVKIFNTNHAFCLETNNGAEIVVHMGIDTVALEGKGFKRLVEEGTDVKAGEPILEMDLDFLNANARSMISPVVCSNSDDYSALVILASGKVVAGQTPLYEIKGK.

Residues 1–371 enclose the PTS EIIC type-1 domain; the sequence is MNILGFFQRL…FNLKTPGRED (371 aa). Helical transmembrane passes span 16–36, 40–60, 70–90, 92–112, 132–152, 165–185, 192–212, 232–252, 264–284, 285–305, 308–328, and 339–359; these read LPIA…PDLL, FIAQ…AIGV, GSAA…MVTI, PEIN…GAVY, FVPI…GYVW, WIVS…RLLI, VLNT…GTVF, GFFP…YLAA, LLSV…EFLF, LFLA…SLFI, ALGI…VLMY, and MLLV…SAVI. The 83-residue stretch at 390–472 folds into the PTS EIIB type-1 domain; it reads TQLATSYIAA…KKVVTRGPVA (83 aa). Cys412 serves as the catalytic Phosphocysteine intermediate; for EIIB activity. Phosphocysteine; by EIIA is present on Cys412. Residues 519-623 form the PTS EIIA type-1 domain; it reads DEAFASKAVG…SMISPVVCSN (105 aa). The Zn(2+) site is built by His556 and His571. His571 acts as the Tele-phosphohistidine intermediate; for EIIA activity in catalysis. His571 is modified (phosphohistidine; by HPr).

Requires Zn(2+) as cofactor.

The protein localises to the cell inner membrane. The enzyme catalyses N(pros)-phospho-L-histidyl-[protein] + N-acetyl-D-glucosamine(out) = N-acetyl-D-glucosamine 6-phosphate(in) + L-histidyl-[protein]. The phosphoenolpyruvate-dependent sugar phosphotransferase system (sugar PTS), a major carbohydrate active transport system, catalyzes the phosphorylation of incoming sugar substrates concomitantly with their translocation across the cell membrane. This system is involved in N-acetylglucosamine transport. The polypeptide is PTS system N-acetylglucosamine-specific EIICBA component (nagE) (Klebsiella pneumoniae).